An 829-amino-acid polypeptide reads, in one-letter code: Exocyst complex component SEC10b (829 aa).

Residues 244–266 (RGLEVAVANLQDYCNELENRLLS) are a coiled coil.

The protein belongs to the SEC10 family. In terms of assembly, the exocyst complex is composed of SEC3, SEC5, SEC6, SEC8, SEC10, EXO70A1 and EXO84B. Interacts with EXO84B. Binds to EXO70E2. In terms of tissue distribution, expressed in seedlings, roots, leaves and flowers.

Its subcellular location is the cytoplasm. It is found in the cytosol. It localises to the secreted. The protein localises to the extracellular exosome. Component of the exocyst complex involved in the docking of exocytic vesicles with fusion sites on the plasma membrane during regulated or polarized secretion. Involved in polarized cell growth and organ morphogenesis. During cytokinesis, involved in cell plate initiation, cell plate maturation and formation of new primary cell wall. The polypeptide is Exocyst complex component SEC10b (Arabidopsis thaliana (Mouse-ear cress)).